Reading from the N-terminus, the 114-residue chain is Ribonuclease P protein component (114 aa).

This sequence belongs to the RnpA family. As to quaternary structure, consists of a catalytic RNA component (M1 or rnpB) and a protein subunit.

The catalysed reaction is Endonucleolytic cleavage of RNA, removing 5'-extranucleotides from tRNA precursor.. Functionally, RNaseP catalyzes the removal of the 5'-leader sequence from pre-tRNA to produce the mature 5'-terminus. It can also cleave other RNA substrates such as 4.5S RNA. The protein component plays an auxiliary but essential role in vivo by binding to the 5'-leader sequence and broadening the substrate specificity of the ribozyme. This is Ribonuclease P protein component from Borrelia duttonii (strain Ly).